The chain runs to 724 residues: Peroxidase mlt-7 (724 aa).

A signal peptide spans 1 to 24; the sequence is MRRLHRNLSLLFLICILNEYRIES. N7 carries N-linked (GlcNAc...) asparagine glycosylation. The propeptide occupies 25–178; sequence QTLSPPITDR…GCVPQLSDVG (154 aa). Positions 42-76 constitute a ShKT domain; the sequence is CCDHHEWCRFWASIGECNANKDWMTENCQLACGTC. C181 and C198 are disulfide-bonded. Residue N233 is glycosylated (N-linked (GlcNAc...) asparagine). The active-site Proton acceptor is H271. Residue D272 coordinates Ca(2+). C284 and C294 are oxidised to a cystine. Residues T335, Y337, D339, and S341 each coordinate Ca(2+). Residue H493 participates in heme b binding. N509 and N617 each carry an N-linked (GlcNAc...) asparagine glycan. 2 cysteine pairs are disulfide-bonded: C588/C645 and C686/C710.

It belongs to the peroxidase family. The cofactor is heme b. As to expression, expressed in the hypodermal cells, specifically the head and seam/body.

The catalysed reaction is 2 a phenolic donor + H2O2 = 2 a phenolic radical donor + 2 H2O. Plays an essential role in cuticle biogenesis. Required in combination with bli-3 for correct formation of cross-links in cuticle collagens. This Caenorhabditis elegans protein is Peroxidase mlt-7.